Consider the following 378-residue polypeptide: Alcohol dehydrogenase (378 aa).

Fe cation contacts are provided by Asp-195, His-199, His-262, and His-274.

This sequence belongs to the iron-containing alcohol dehydrogenase family. The cofactor is Fe(2+). Requires Mn(2+) as cofactor.

It catalyses the reaction a primary alcohol + NAD(+) = an aldehyde + NADH + H(+). It carries out the reaction butan-1-ol + NAD(+) = butanal + NADH + H(+). The enzyme catalyses hexan-1-ol + NAD(+) = hexanal + NADH + H(+). The catalysed reaction is ethanol + NAD(+) = acetaldehyde + NADH + H(+). Functionally, thermostable type III alcohol dehydrogenase. For oxidation activity, the best substrates are 1-butanol and 1-hexanol, followed by ethanol. Shows lower activity with ethylene glycol, isopentanol, isopropanol and glycerol. Displays higher reduction activity in the presence of butanal, followed by acetaldehyde. Has lower activity with hexanal and acetone. The sequence is that of Alcohol dehydrogenase from Thermococcus barophilus.